The chain runs to 853 residues: Replication protein A 70 kDa DNA-binding subunit C (853 aa).

A disordered region spans residues 118 to 282; that stretch reads PKEPGHSSIN…QSAYQPQQPP (165 aa). Polar residues-rich tracts occupy residues 124–144, 159–173, 180–194, 201–211, 222–249, and 263–278; these read SSIN…SEQQ, SANS…NSSD, SANS…SSSD, SANSPQRQVVH, PQVS…SSNA, and TATT…AYQP. A DNA-binding region (OB) is located at residues 312 to 399; sequence WTIKVRVTSK…NDYEIHLDSA (88 aa). A C4-type zinc finger spans residues 602–628; the sequence is CPIMNGDRPCSKKVTNNGDGTWRCEKC.

Belongs to the replication factor A protein 1 family. In terms of assembly, heterotrimer of RPA1, RPA2 and RPA3 (canonical replication protein A complex).

It localises to the nucleus. In terms of biological role, component of the replication protein A complex (RPA) required for DNA recombination, repair and replication. The activity of RPA is mediated by single-stranded DNA binding and protein interactions. Probably involved in repair of double-strand DNA breaks (DSBs) induced by genotoxic stresses. This is Replication protein A 70 kDa DNA-binding subunit C (RPA1C) from Arabidopsis thaliana (Mouse-ear cress).